We begin with the raw amino-acid sequence, 211 residues long: ATP-dependent Clp protease proteolytic subunit (211 aa).

Ser-107 serves as the catalytic Nucleophile. His-132 is an active-site residue.

The protein belongs to the peptidase S14 family. In terms of assembly, fourteen ClpP subunits assemble into 2 heptameric rings which stack back to back to give a disk-like structure with a central cavity, resembling the structure of eukaryotic proteasomes.

The protein localises to the cytoplasm. It carries out the reaction Hydrolysis of proteins to small peptides in the presence of ATP and magnesium. alpha-casein is the usual test substrate. In the absence of ATP, only oligopeptides shorter than five residues are hydrolyzed (such as succinyl-Leu-Tyr-|-NHMec, and Leu-Tyr-Leu-|-Tyr-Trp, in which cleavage of the -Tyr-|-Leu- and -Tyr-|-Trp bonds also occurs).. Cleaves peptides in various proteins in a process that requires ATP hydrolysis. Has a chymotrypsin-like activity. Plays a major role in the degradation of misfolded proteins. The polypeptide is ATP-dependent Clp protease proteolytic subunit (Xanthobacter autotrophicus (strain ATCC BAA-1158 / Py2)).